Reading from the N-terminus, the 597-residue chain is MGCLDVRFCRIIFALYSLIRKYGAWLVIPAMLGGAAFLADSVLTPAVSISSAVEGLKTLPALEHLFTENKDLTMMITAVIIVILFAVQSRGTESIGKVFGSVVMVWFAFLAIVGVVAIGNDWSVLAALNPYYGIKFLFSPNNATGLALMGTVFLSTTGAEALYSDMGHVGRGNIYFTWPFIKVALVLNYFGQGAWMLHNQNNPELADAEGINPFFQMMDPNVRYVAVVLSVTAGIIASQALITGAFTMVSEATGLNWMPHLQVCYPARTRGQLYIPVVNVVLCVATLAVLLLFRDSEHISAAYGLALTITMITTTILLGIYLWHRSNKFGAVVFTIVFLAIQVLFFAASMAKFLHGGWFTLLLTLAILMIMYTWNEGTKLERSQRRHMMPKDFLPALDKLHGDSRIHRFADNIVYLTSDPDLKRLDTDIFFSIFADHPKRARAWWAVAVETTDEPFTREYSVESFGTDYLFRVRIRLGFKVSQSIPAYLHQIMHDLEKTGELPNQQSIYPKLDADPGIGTIRYVVIHKALMPESKVSGRGALSLQIKYAIRRVAGSPVKWFGLAPYNPLVEVQPLFVSTRRPPRLTRVASQAPKREG.

Transmembrane regions (helical) follow at residues 23–43, 72–92, 98–118, 143–163, 174–194, 226–246, 273–293, 303–323, 329–349, and 353–373; these read GAWL…DSVL, LTMM…SRGT, VFGS…VVAI, ATGL…EALY, IYFT…GQGA, AVVL…TGAF, LYIP…LLLF, YGLA…IYLW, FGAV…FAAS, and FLHG…IMYT.

The protein belongs to the HAK/KUP transporter (TC 2.A.72) family.

The protein resides in the cell membrane. The enzyme catalyses K(+)(in) + H(+)(in) = K(+)(out) + H(+)(out). Functionally, transport of potassium into the cell. Likely operates as a K(+):H(+) symporter. The polypeptide is Probable potassium transport system protein Kup 1 (kup1) (Bifidobacterium longum (strain NCC 2705)).